Reading from the N-terminus, the 258-residue chain is Tropinone reductase-like 3 (258 aa).

19–43 (IVTASTQGIGFAIAYRLGLEGAAVV) serves as a coordination point for NAD(+). Substrate is bound at residue serine 150. Residue tyrosine 163 is the Proton acceptor of the active site.

The protein belongs to the short-chain dehydrogenases/reductases (SDR) family.

Has no tropinone reductase activity. The protein is Tropinone reductase-like 3 of Erythroxylum coca (Coca plant).